The following is a 401-amino-acid chain: CCA-adding enzyme (401 aa).

ATP is bound by residues Gly32 and Arg35. The CTP site is built by Gly32 and Arg35. Mg(2+) is bound by residues Asp45 and Asp47. Residues Arg116, Asp159, Arg162, Arg165, and Arg168 each contribute to the ATP site. 5 residues coordinate CTP: Arg116, Asp159, Arg162, Arg165, and Arg168.

The protein belongs to the tRNA nucleotidyltransferase/poly(A) polymerase family. Bacterial CCA-adding enzyme type 3 subfamily. In terms of assembly, homodimer. Requires Mg(2+) as cofactor.

It catalyses the reaction a tRNA precursor + 2 CTP + ATP = a tRNA with a 3' CCA end + 3 diphosphate. The catalysed reaction is a tRNA with a 3' CCA end + 2 CTP + ATP = a tRNA with a 3' CCACCA end + 3 diphosphate. In terms of biological role, catalyzes the addition and repair of the essential 3'-terminal CCA sequence in tRNAs without using a nucleic acid template. Adds these three nucleotides in the order of C, C, and A to the tRNA nucleotide-73, using CTP and ATP as substrates and producing inorganic pyrophosphate. tRNA 3'-terminal CCA addition is required both for tRNA processing and repair. Also involved in tRNA surveillance by mediating tandem CCA addition to generate a CCACCA at the 3' terminus of unstable tRNAs. While stable tRNAs receive only 3'-terminal CCA, unstable tRNAs are marked with CCACCA and rapidly degraded. The polypeptide is CCA-adding enzyme (Leuconostoc mesenteroides subsp. mesenteroides (strain ATCC 8293 / DSM 20343 / BCRC 11652 / CCM 1803 / JCM 6124 / NCDO 523 / NBRC 100496 / NCIMB 8023 / NCTC 12954 / NRRL B-1118 / 37Y)).